The chain runs to 557 residues: Aerobic glycerol-3-phosphate dehydrogenase (557 aa).

21–49 lines the FAD pocket; it reads DVVIIGGGITGAGIALDASQRGMKVALVE.

The protein belongs to the FAD-dependent glycerol-3-phosphate dehydrogenase family. It depends on FAD as a cofactor.

It localises to the cytoplasm. The catalysed reaction is a quinone + sn-glycerol 3-phosphate = dihydroxyacetone phosphate + a quinol. It participates in polyol metabolism; glycerol degradation via glycerol kinase pathway; glycerone phosphate from sn-glycerol 3-phosphate (aerobic route): step 1/1. This chain is Aerobic glycerol-3-phosphate dehydrogenase (glpD), found in Staphylococcus haemolyticus (strain JCSC1435).